The sequence spans 179 residues: ATP synthase subunit delta (179 aa).

Belongs to the ATPase delta chain family. As to quaternary structure, F-type ATPases have 2 components, F(1) - the catalytic core - and F(0) - the membrane proton channel. F(1) has five subunits: alpha(3), beta(3), gamma(1), delta(1), epsilon(1). F(0) has three main subunits: a(1), b(2) and c(10-14). The alpha and beta chains form an alternating ring which encloses part of the gamma chain. F(1) is attached to F(0) by a central stalk formed by the gamma and epsilon chains, while a peripheral stalk is formed by the delta and b chains.

The protein resides in the cell inner membrane. Functionally, f(1)F(0) ATP synthase produces ATP from ADP in the presence of a proton or sodium gradient. F-type ATPases consist of two structural domains, F(1) containing the extramembraneous catalytic core and F(0) containing the membrane proton channel, linked together by a central stalk and a peripheral stalk. During catalysis, ATP synthesis in the catalytic domain of F(1) is coupled via a rotary mechanism of the central stalk subunits to proton translocation. Its function is as follows. This protein is part of the stalk that links CF(0) to CF(1). It either transmits conformational changes from CF(0) to CF(1) or is implicated in proton conduction. This is ATP synthase subunit delta from Burkholderia cenocepacia (strain ATCC BAA-245 / DSM 16553 / LMG 16656 / NCTC 13227 / J2315 / CF5610) (Burkholderia cepacia (strain J2315)).